The chain runs to 160 residues: MSIQTLIIISIVIFILWLTFTSGSSYDPYHNFMKQKNHIFHNINKWVKKDVSKFLETLLKPFDKQCVGKTRTIESLEKLRTENNVEFKKLLNCGYIHNLFILIGLSVWEDFSKLHTETSLNTFINECLIPISTSPNFVAGNMLYTQTKPGVLKCLNDKNL.

Residues 1–21 form a helical membrane-spanning segment; sequence MSIQTLIIISIVIFILWLTFT.

It belongs to the IIV-6 203L/325L family.

The protein resides in the membrane. This is an uncharacterized protein from Invertebrate iridescent virus 6 (IIV-6).